Here is a 498-residue protein sequence, read N- to C-terminus: Histidine--tRNA ligase (498 aa).

This sequence belongs to the class-II aminoacyl-tRNA synthetase family. As to quaternary structure, homodimer.

Its subcellular location is the cytoplasm. It catalyses the reaction tRNA(His) + L-histidine + ATP = L-histidyl-tRNA(His) + AMP + diphosphate + H(+). In Bartonella quintana (strain Toulouse) (Rochalimaea quintana), this protein is Histidine--tRNA ligase.